Consider the following 413-residue polypeptide: Gamma-glutamyl phosphate reductase (413 aa).

This sequence belongs to the gamma-glutamyl phosphate reductase family.

The protein localises to the cytoplasm. It carries out the reaction L-glutamate 5-semialdehyde + phosphate + NADP(+) = L-glutamyl 5-phosphate + NADPH + H(+). Its pathway is amino-acid biosynthesis; L-proline biosynthesis; L-glutamate 5-semialdehyde from L-glutamate: step 2/2. Functionally, catalyzes the NADPH-dependent reduction of L-glutamate 5-phosphate into L-glutamate 5-semialdehyde and phosphate. The product spontaneously undergoes cyclization to form 1-pyrroline-5-carboxylate. The protein is Gamma-glutamyl phosphate reductase of Lactococcus lactis subsp. lactis (strain IL1403) (Streptococcus lactis).